The following is a 295-amino-acid chain: Lipase 2 (295 aa).

An N-terminal signal peptide occupies residues M1–A31. The active-site Nucleophile is the S48. Disulfide bonds link C65-C89, C138-C152, and C205-C254. The active site involves H275.

Belongs to the 'GDSL' lipolytic enzyme family. As to quaternary structure, monomer.

It is found in the secreted. It catalyses the reaction a triacylglycerol + H2O = a diacylglycerol + a fatty acid + H(+). Strongly inhibited by Ag(+). The cations Ca(2+) and Mg(2+) do not significantly reduce the lipolytic activity of SCO7513, whereas high concentrations of Co(2+) and Cu(2+) partially inhibit it. Is not inhibited by DTT in vitro. Is resistant to PMSF inhibition, except in the presence of Ca(2+). Catalyzes the hydrolysis of fatty acid esters with a preference for long chain fatty acids (C16-C18). This Streptomyces coelicolor (strain ATCC BAA-471 / A3(2) / M145) protein is Lipase 2.